The following is a 173-amino-acid chain: NADH-ubiquinone oxidoreductase chain 6 (173 aa).

4 helical membrane passes run 12–32, 47–67, 94–114, and 142–162; these read VFWLIGVSSNISVYYGVVSLV, GSFLALVLFLIYLGGMLVIFA, VVLAVVFVLVGWGWWGVGECG, and GALMMAMFGLFLTFFIVLVLV.

This sequence belongs to the complex I subunit 6 family.

The protein resides in the mitochondrion membrane. The enzyme catalyses a ubiquinone + NADH + 5 H(+)(in) = a ubiquinol + NAD(+) + 4 H(+)(out). Core subunit of the mitochondrial membrane respiratory chain NADH dehydrogenase (Complex I) that is believed to belong to the minimal assembly required for catalysis. Complex I functions in the transfer of electrons from NADH to the respiratory chain. The immediate electron acceptor for the enzyme is believed to be ubiquinone. The chain is NADH-ubiquinone oxidoreductase chain 6 (MT-ND6) from Pelomedusa subrufa (African side-necked turtle).